Here is a 726-residue protein sequence, read N- to C-terminus: F-box protein COS111 (726 aa).

The F-box domain maps to 143–194 (FADINCLPEEIICRIIANLNDADSQRNCLLVSQEWSECAKRIIYKDVKFTST). A disordered region spans residues 276–295 (RSRTRRSSDASSMNSSVFSH). Residues 284–295 (DASSMNSSVFSH) are compositionally biased toward low complexity.

In terms of biological role, F-box protein probably involved in ubiquitin conjugation pathway. The polypeptide is F-box protein COS111 (COS111) (Kluyveromyces lactis (strain ATCC 8585 / CBS 2359 / DSM 70799 / NBRC 1267 / NRRL Y-1140 / WM37) (Yeast)).